The primary structure comprises 269 residues: MTPLKIAIAGANGRMGRVLVEAVNNHPDTVLSGALEHSGSEALGLDAGYAVGLKTGIAISDDVDAVLAQSDVLIDFTRPEPTLKHLQKCVEKQVNIIIGTTGFDDAGKAAIHTAAEQTGIVFAANFSVGVNLTFHILDTVARVLNEGYDIEIIEGHHRHKVDAPSGTALRMGEVIAGALGRDLKQCAVYGREGHTGPRDPSTIGFATVRAGDIVGDHTALFATDGERVEITHKAGSRMTFAAGAVRAAVWVNGKTGLYDMQDVLGLNNR.

NAD(+) is bound by residues 10–15, Glu36, 99–101, and 123–126; these read GANGRM, GTT, and AANF. Catalysis depends on His156, which acts as the Proton donor/acceptor. Residue His157 participates in (S)-2,3,4,5-tetrahydrodipicolinate binding. Lys160 acts as the Proton donor in catalysis. 166–167 provides a ligand contact to (S)-2,3,4,5-tetrahydrodipicolinate; sequence GT.

Belongs to the DapB family.

It localises to the cytoplasm. It carries out the reaction (S)-2,3,4,5-tetrahydrodipicolinate + NAD(+) + H2O = (2S,4S)-4-hydroxy-2,3,4,5-tetrahydrodipicolinate + NADH + H(+). The enzyme catalyses (S)-2,3,4,5-tetrahydrodipicolinate + NADP(+) + H2O = (2S,4S)-4-hydroxy-2,3,4,5-tetrahydrodipicolinate + NADPH + H(+). It participates in amino-acid biosynthesis; L-lysine biosynthesis via DAP pathway; (S)-tetrahydrodipicolinate from L-aspartate: step 4/4. Functionally, catalyzes the conversion of 4-hydroxy-tetrahydrodipicolinate (HTPA) to tetrahydrodipicolinate. The protein is 4-hydroxy-tetrahydrodipicolinate reductase of Neisseria meningitidis serogroup C (strain 053442).